The primary structure comprises 367 residues: Dual-specificity RNA methyltransferase RlmN (367 aa).

The active-site Proton acceptor is E91. In terms of domain architecture, Radical SAM core spans 102-337 (GKVRMTQCLS…AIIRKSKGQD (236 aa)). A disulfide bridge connects residues C109 and C342. Positions 116, 120, and 123 each coordinate [4Fe-4S] cluster. Residues 169-170 (GE), S201, 223-225 (SLH), and N299 each bind S-adenosyl-L-methionine. C342 functions as the S-methylcysteine intermediate in the catalytic mechanism.

Belongs to the radical SAM superfamily. RlmN family. Requires [4Fe-4S] cluster as cofactor.

The protein resides in the cytoplasm. It carries out the reaction adenosine(2503) in 23S rRNA + 2 reduced [2Fe-2S]-[ferredoxin] + 2 S-adenosyl-L-methionine = 2-methyladenosine(2503) in 23S rRNA + 5'-deoxyadenosine + L-methionine + 2 oxidized [2Fe-2S]-[ferredoxin] + S-adenosyl-L-homocysteine. The catalysed reaction is adenosine(37) in tRNA + 2 reduced [2Fe-2S]-[ferredoxin] + 2 S-adenosyl-L-methionine = 2-methyladenosine(37) in tRNA + 5'-deoxyadenosine + L-methionine + 2 oxidized [2Fe-2S]-[ferredoxin] + S-adenosyl-L-homocysteine. Its function is as follows. Specifically methylates position 2 of adenine 2503 in 23S rRNA and position 2 of adenine 37 in tRNAs. m2A2503 modification seems to play a crucial role in the proofreading step occurring at the peptidyl transferase center and thus would serve to optimize ribosomal fidelity. In Nitratidesulfovibrio vulgaris (strain DSM 19637 / Miyazaki F) (Desulfovibrio vulgaris), this protein is Dual-specificity RNA methyltransferase RlmN.